Consider the following 302-residue polypeptide: Zinc transporter ZIP1 (302 aa).

The Extracellular portion of the chain corresponds to 1 to 6; that stretch reads MEYLLQ. A helical membrane pass occupies residues 7-27; that stretch reads VKIAALVGLLFLTLIFGFIPA. The Cytoplasmic portion of the chain corresponds to 28–44; sequence RVKWFRDTDGTETHRTV. A helical transmembrane segment spans residues 45 to 65; that stretch reads LSLISCFAGGVFLSACFLDII. Topologically, residues 66–80 are extracellular; the sequence is PDYLSDINTELHARQ. A helical transmembrane segment spans residues 81 to 101; that stretch reads LETSFPLPEFIMAAGFFTVLI. The Cytoplasmic segment spans residues 102–158; that stretch reads LERIVLNCKEMRATHEERTTLIPERKSGHGHGHGDGPDPESSGHHVHVDFQAHSPFR. Positions 123–145 are disordered; the sequence is IPERKSGHGHGHGDGPDPESSGH. Residues 159 to 179 form a helical membrane-spanning segment; it reads SFMLFLSLSLHSIFEGLAIGL. Residues 180 to 185 are Extracellular-facing; it reads QTTDPK. Residues 186–206 traverse the membrane as a helical segment; the sequence is VVEICIAILVHKSIIVFSLAV. Residues 207–216 lie on the Cytoplasmic side of the membrane; sequence KLVQSAIPPL. The chain crosses the membrane as a helical span at residues 217–237; sequence WVAAYIGVFALMSPVGIAIGI. Over 238–251 the chain is Extracellular; it reads SVMEAQLAAGPLIQ. Residues 252 to 272 form a helical membrane-spanning segment; that stretch reads AILEGFAAGTFVYITFLEILP. Over 273 to 281 the chain is Cytoplasmic; it reads HELNSPGKQ. A helical membrane pass occupies residues 282–302; sequence LLKVLFLLLGFSIMAALSFLG.

It belongs to the ZIP transporter (TC 2.A.5) family. Highest levels in ovary, lower levels in intestine and gill, barely detected in kidney.

It localises to the cell membrane. The protein localises to the endoplasmic reticulum membrane. The enzyme catalyses Zn(2+)(in) = Zn(2+)(out). Its function is as follows. Transporter for the divalent cation Zn(2+). Mediates the influx of Zn(2+) into cells from extracellular space. This Takifugu rubripes (Japanese pufferfish) protein is Zinc transporter ZIP1 (slc39a1).